Consider the following 555-residue polypeptide: Glutamine--tRNA ligase (555 aa).

The short motif at 34–44 (PEPNGYLHIGH) is the 'HIGH' region element. ATP is bound by residues 35-37 (EPN) and 41-47 (HIGHAKS). 2 residues coordinate L-glutamine: D67 and Y212. ATP contacts are provided by residues T231, 261–262 (RL), and 269–271 (MSK). The short motif at 268–272 (VMSKR) is the 'KMSKS' region element. The interaction with tRNA stretch occupies residues 317 to 324 (TKQDNTIE).

Belongs to the class-I aminoacyl-tRNA synthetase family. In terms of assembly, monomer.

It is found in the cytoplasm. It catalyses the reaction tRNA(Gln) + L-glutamine + ATP = L-glutaminyl-tRNA(Gln) + AMP + diphosphate. The chain is Glutamine--tRNA ligase from Citrobacter koseri (strain ATCC BAA-895 / CDC 4225-83 / SGSC4696).